Here is an 80-residue protein sequence, read N- to C-terminus: Raniseptin-7 (80 aa).

The N-terminal stretch at 1–22 is a signal peptide; that stretch reads MAFLKKSLFLVLFLGIVSLSIC. A propeptide spanning residues 23 to 49 is cleaved from the precursor; the sequence is EEEKREGEEEEKQEEENEELSEEELRE. A disordered region spans residues 27 to 46; that stretch reads REGEEEEKQEEENEELSEEE. Acidic residues predominate over residues 30–44; sequence EEEEKQEEENEELSE.

The protein belongs to the frog skin active peptide (FSAP) family. Dermaseptin subfamily. Expressed by the skin glands.

It localises to the secreted. Has antibacterial activity. The polypeptide is Raniseptin-7 (Boana raniceps (Chaco tree frog)).